Reading from the N-terminus, the 499-residue chain is Glycerol kinase (499 aa).

Threonine 13 lines the ADP pocket. ATP contacts are provided by threonine 13, threonine 14, and serine 15. Position 13 (threonine 13) interacts with sn-glycerol 3-phosphate. An ADP-binding site is contributed by arginine 17. Sn-glycerol 3-phosphate contacts are provided by arginine 83, glutamate 84, tyrosine 135, and aspartate 244. Arginine 83, glutamate 84, tyrosine 135, aspartate 244, and glutamine 245 together coordinate glycerol. 2 residues coordinate ADP: threonine 266 and glycine 309. Threonine 266, glycine 309, glutamine 313, and glycine 410 together coordinate ATP. ADP contacts are provided by glycine 410 and asparagine 414.

Belongs to the FGGY kinase family.

The enzyme catalyses glycerol + ATP = sn-glycerol 3-phosphate + ADP + H(+). It functions in the pathway polyol metabolism; glycerol degradation via glycerol kinase pathway; sn-glycerol 3-phosphate from glycerol: step 1/1. With respect to regulation, inhibited by fructose 1,6-bisphosphate (FBP). Its function is as follows. Key enzyme in the regulation of glycerol uptake and metabolism. Catalyzes the phosphorylation of glycerol to yield sn-glycerol 3-phosphate. The sequence is that of Glycerol kinase from Paraburkholderia phytofirmans (strain DSM 17436 / LMG 22146 / PsJN) (Burkholderia phytofirmans).